Consider the following 154-residue polypeptide: Aspartate carbamoyltransferase regulatory chain (154 aa).

Zn(2+)-binding residues include C109, C114, C138, and C141.

This sequence belongs to the PyrI family. As to quaternary structure, contains catalytic and regulatory chains. Zn(2+) serves as cofactor.

In terms of biological role, involved in allosteric regulation of aspartate carbamoyltransferase. This chain is Aspartate carbamoyltransferase regulatory chain, found in Yersinia enterocolitica serotype O:8 / biotype 1B (strain NCTC 13174 / 8081).